The primary structure comprises 504 residues: Anaerobic nitric oxide reductase transcription regulator NorR (504 aa).

Asp57 bears the 4-aspartylphosphate mark. The 230-residue stretch at 187-416 folds into the Sigma-54 factor interaction domain; the sequence is MIGLSPGMTQ…LEHAIHRAVV (230 aa). ATP-binding positions include 215–222 and 278–287; these read GETGTGKE and ADNGTLFLDE. Residues 479–498 constitute a DNA-binding region (H-T-H motif); sequence WAACARMLETDVANLHRLAK.

The protein operates within nitrogen metabolism; nitric oxide reduction. Its function is as follows. Required for the expression of anaerobic nitric oxide (NO) reductase, acts as a transcriptional activator for at least the norVW operon. Activation also requires sigma-54. This Escherichia coli O6:K15:H31 (strain 536 / UPEC) protein is Anaerobic nitric oxide reductase transcription regulator NorR.